Reading from the N-terminus, the 593-residue chain is UvrABC system protein C (593 aa).

A GIY-YIG domain is found at 14 to 91 (DSPGCYLHKD…IQENMPKYNI (78 aa)). The 36-residue stretch at 196-231 (NKIVNGLTEKMKSAAMTMEFERAAEYRDLIEAISLL) folds into the UVR domain.

Belongs to the UvrC family. As to quaternary structure, interacts with UvrB in an incision complex.

Its subcellular location is the cytoplasm. The UvrABC repair system catalyzes the recognition and processing of DNA lesions. UvrC both incises the 5' and 3' sides of the lesion. The N-terminal half is responsible for the 3' incision and the C-terminal half is responsible for the 5' incision. This is UvrABC system protein C from Streptococcus agalactiae serotype III (strain NEM316).